The chain runs to 38 residues: Photosystem II reaction center protein M (38 aa).

A helical membrane pass occupies residues 7–27 (GFVASILFVLVPTVFLLILYI).

Belongs to the PsbM family. As to quaternary structure, PSII is composed of 1 copy each of membrane proteins PsbA, PsbB, PsbC, PsbD, PsbE, PsbF, PsbH, PsbI, PsbJ, PsbK, PsbL, PsbM, PsbT, PsbX, PsbY, PsbZ, Psb30/Ycf12, peripheral proteins PsbO, CyanoQ (PsbQ), PsbU, PsbV and a large number of cofactors. It forms dimeric complexes.

It localises to the cellular thylakoid membrane. One of the components of the core complex of photosystem II (PSII). PSII is a light-driven water:plastoquinone oxidoreductase that uses light energy to abstract electrons from H(2)O, generating O(2) and a proton gradient subsequently used for ATP formation. It consists of a core antenna complex that captures photons, and an electron transfer chain that converts photonic excitation into a charge separation. This subunit is found at the monomer-monomer interface. The polypeptide is Photosystem II reaction center protein M (Nostoc punctiforme (strain ATCC 29133 / PCC 73102)).